The sequence spans 146 residues: Leptin (146 aa).

Cysteines 96 and 146 form a disulfide.

It belongs to the leptin family.

It localises to the secreted. Its function is as follows. Key player in the regulation of energy balance and body weight control. Once released into the circulation, has central and peripheral effects by binding LEPR, found in many tissues, which results in the activation of several major signaling pathways. In the hypothalamus, acts as an appetite-regulating factor that induces a decrease in food intake and an increase in energy consumption by inducing anorexinogenic factors and suppressing orexigenic neuropeptides, also regulates bone mass and secretion of hypothalamo-pituitary-adrenal hormones. In the periphery, increases basal metabolism, influences reproductive function, regulates pancreatic beta-cell function and insulin secretion, is pro-angiogenic for endothelial cell and affects innate and adaptive immunity. In the arcuate nucleus of the hypothalamus, activates by depolarization POMC neurons inducing FOS and SOCS3 expression to release anorexigenic peptides and inhibits by hyperpolarization NPY neurons inducing SOCS3 with a consequent reduction on release of orexigenic peptides. In addition to its known satiety inducing effect, has a modulatory role in nutrient absorption. In the intestine, reduces glucose absorption by enterocytes by activating PKC and leading to a sequential activation of p38, PI3K and ERK signaling pathways which exerts an inhibitory effect on glucose absorption. Acts as a growth factor on certain tissues, through the activation of different signaling pathways increases expression of genes involved in cell cycle regulation such as CCND1, via JAK2-STAT3 pathway, or VEGFA, via MAPK1/3 and PI3K-AKT1 pathways. May also play an apoptotic role via JAK2-STAT3 pathway and up-regulation of BIRC5 expression. Pro-angiogenic, has mitogenic activity on vascular endothelial cells and plays a role in matrix remodeling by regulating the expression of matrix metalloproteinases (MMPs) and tissue inhibitors of metalloproteinases (TIMPs). In innate immunity, modulates the activity and function of neutrophils by increasing chemotaxis and the secretion of oxygen radicals. Increases phagocytosis by macrophages and enhances secretion of pro-inflammatory mediators. Increases cytotoxic ability of NK cells. Plays a pro-inflammatory role, in synergy with IL1B, by inducing NOS2 which promotes the production of IL6, IL8 and Prostaglandin E2, through a signaling pathway that involves JAK2, PI3K, MAP2K1/MEK1 and MAPK14/p38. In adaptive immunity, promotes the switch of memory T-cells towards T helper-1 cell immune responses. Increases CD4(+)CD25(-) T-cell proliferation and reduces autophagy during TCR (T-cell receptor) stimulation, through MTOR signaling pathway activation and BCL2 up-regulation. The polypeptide is Leptin (LEP) (Ovis aries (Sheep)).